A 162-amino-acid chain; its full sequence is CD-NTase-associated protein 7 (162 aa).

A disordered region spans residues 138–162 (HSGLTQSGGREYSSNGYGMQRKDYN). Over residues 139–154 (SGLTQSGGREYSSNGY) the composition is skewed to polar residues.

The protein belongs to the HORMA family. HORMA1 subfamily. In terms of assembly, forms complexes with CdnC with 1:1 and 2:2 stoichimetry, and a 1:1:6 CdnC:Cap7:Cap6 complex.

In terms of biological role, sensor protein of a CBASS antivirus system. CBASS (cyclic oligonucleotide-based antiphage signaling system) provides immunity against bacteriophage. The CD-NTase protein synthesizes cyclic nucleotides in response to infection; these serve as specific second messenger signals. The signals activate a diverse range of effectors, leading to bacterial cell death and thus abortive phage infection. A type III CBASS system. Expression of this CBASS system (Cap18-Cap6-Cap7-CdnC-CapW-Cap17) in a susceptible E.coli (strain MG1655) confers resistance to bacteriophage P1. The sensor protein for this CBASS system. Binds to a closure peptide, which allows it to activate CdnC for second messenger synthesis. This Escherichia coli (strain KTE188) protein is CD-NTase-associated protein 7.